The following is a 379-amino-acid chain: Heme chaperone HemW (379 aa).

Residues 1–232 form the Radical SAM core domain; sequence MLQKPNSAYF…MDILAKNGYN (232 aa). Tyrosine 9 lines the S-adenosyl-L-methionine pocket. Residues cysteine 15, cysteine 19, and cysteine 22 each contribute to the [4Fe-4S] cluster site. S-adenosyl-L-methionine contacts are provided by residues glycine 60, 61 to 62, glutamate 93, glutamine 120, arginine 132, and aspartate 157; that span reads GT.

This sequence belongs to the anaerobic coproporphyrinogen-III oxidase family. HemW subfamily. Homodimer.

It is found in the cytoplasm. Its subcellular location is the cell membrane. Functionally, could serve in the delivery of heme to a membrane-localized target protein. Binds one molecule of heme per monomer, possibly covalently; heme and Fe-S cluster binding are independent. Incubation with the reductant sodium dithionite increases binding. Does not have coproporphyrinogen III dehydrogenase activity in vitro, does not complement an E.coli hemN deletion in vivo. Binds 1 Fe-S cluster, it is probably [4Fe-4S]. The cluster is coordinated with 3 cysteines and an exchangeable S-adenosyl-L-methionine; only dimeric protein has the cluster. The chain is Heme chaperone HemW from Lactococcus lactis subsp. lactis (strain IL1403) (Streptococcus lactis).